A 314-amino-acid chain; its full sequence is Protein phosphatase PTC7 homolog fig (314 aa).

Residues 43-309 (PYLVTVVQGR…DDITLILSSV (267 aa)) enclose the PPM-type phosphatase domain. Positions 87, 88, and 232 each coordinate Mn(2+).

Belongs to the PP2C family. Mg(2+) is required as a cofactor. The cofactor is Mn(2+).

It carries out the reaction O-phospho-L-seryl-[protein] + H2O = L-seryl-[protein] + phosphate. It catalyses the reaction O-phospho-L-threonyl-[protein] + H2O = L-threonyl-[protein] + phosphate. This Drosophila sechellia (Fruit fly) protein is Protein phosphatase PTC7 homolog fig.